The following is a 371-amino-acid chain: Cysteine proteinase 1 (371 aa).

The first 18 residues, Met-1 to Ala-18, serve as a signal peptide directing secretion. Positions Ala-19–Gly-136 are cleaved as a propeptide — activation peptide. Cystine bridges form between Cys-158–Cys-208 and Cys-192–Cys-241. The active site involves Cys-161. N-linked (GlcNAc...) asparagine glycosylation occurs at Asn-254. Cys-297 and Cys-354 are disulfide-bonded. Active-site residues include His-303 and Asn-330.

Belongs to the peptidase C1 family. As to expression, expressed during the late stages of seed ripening, in mature seeds and during germination.

Its function is as follows. Involved in the degradation of the storage protein zein. May play a role in proteolysis during emergencies. This Zea mays (Maize) protein is Cysteine proteinase 1 (CCP1).